A 173-amino-acid chain; its full sequence is T-complex protein 1 subunit alpha (173 aa).

It belongs to the TCP-1 chaperonin family. In terms of assembly, component of the chaperonin-containing T-complex (TRiC), a heterooligomeric complex of about 850 to 900 kDa that forms two stacked rings, 12 to 16 nm in diameter.

The protein localises to the cytoplasm. The protein resides in the cytosol. In terms of biological role, component of the chaperonin-containing T-complex (TRiC), a molecular chaperone complex that assists the folding of proteins upon ATP hydrolysis. The polypeptide is T-complex protein 1 subunit alpha (Ambystoma mexicanum (Axolotl)).